The sequence spans 474 residues: uncharacterized protein (474 aa).

A signal peptide spans 1 to 23 (MLRRYLTLSFSSLLLLALLFLTG). Cysteine 24 carries N-palmitoyl cysteine lipidation. Cysteine 24 carries the S-diacylglycerol cysteine lipid modification.

This sequence belongs to the MG067/MG068/MG395 family.

Its subcellular location is the cell membrane. This is an uncharacterized protein from Mycoplasma genitalium (strain ATCC 33530 / DSM 19775 / NCTC 10195 / G37) (Mycoplasmoides genitalium).